The following is a 147-amino-acid chain: Hemoglobin subunit beta (147 aa).

Valine 2 carries the N-acetylvaline modification. A Globin domain is found at histidine 3–histidine 147. At threonine 13 the chain carries Phosphothreonine. A Phosphoserine modification is found at serine 45. Lysine 60 bears the N6-acetyllysine mark. Histidine 64 is a binding site for heme b. At lysine 83 the chain carries N6-acetyllysine. Histidine 93 contacts heme b. Cysteine 94 carries the post-translational modification S-nitrosocysteine. The residue at position 145 (lysine 145) is an N6-acetyllysine.

The protein belongs to the globin family. In terms of assembly, heterotetramer of two alpha chains and two beta chains. Red blood cells.

In terms of biological role, involved in oxygen transport from the lung to the various peripheral tissues. In Papio anubis (Olive baboon), this protein is Hemoglobin subunit beta (HBB).